A 155-amino-acid chain; its full sequence is Conopressin/neurophysin (155 aa).

Residues 1–26 (MMSSLCGMPLTYLLTAAVLSLSLTDA) form the signal peptide. The cysteines at positions 27 and 32 are disulfide-linked. Residue Gly-35 is modified to Glycine amide. 7 disulfides stabilise this stretch: Cys-50–Cys-94, Cys-53–Cys-67, Cys-61–Cys-84, Cys-68–Cys-74, Cys-101–Cys-115, Cys-109–Cys-127, and Cys-116–Cys-121. Residue Asn-88 is glycosylated (N-linked (GlcNAc...) asparagine).

Belongs to the vasopressin/oxytocin family. Post-translationally, seven disulfide bonds are present in neurophysin.

It is found in the secreted. This Lymnaea stagnalis (Great pond snail) protein is Conopressin/neurophysin.